A 399-amino-acid polypeptide reads, in one-letter code: Acetate kinase (399 aa).

Mg(2+) is bound at residue Asn7. An ATP-binding site is contributed by Lys14. Position 91 (Arg91) interacts with substrate. Asp148 (proton donor/acceptor) is an active-site residue. ATP contacts are provided by residues 208–212 and 283–285; these read HLGNG and DFR. Glu384 is a binding site for Mg(2+).

The protein belongs to the acetokinase family. Homodimer. Mg(2+) is required as a cofactor. It depends on Mn(2+) as a cofactor.

It is found in the cytoplasm. It catalyses the reaction acetate + ATP = acetyl phosphate + ADP. The protein operates within metabolic intermediate biosynthesis; acetyl-CoA biosynthesis; acetyl-CoA from acetate: step 1/2. Its function is as follows. Catalyzes the formation of acetyl phosphate from acetate and ATP. Can also catalyze the reverse reaction. This is Acetate kinase from Dictyoglomus thermophilum (strain ATCC 35947 / DSM 3960 / H-6-12).